Here is a 798-residue protein sequence, read N- to C-terminus: RNA cytosine-C(5)-methyltransferase NSUN2 (798 aa).

Residues 1-13 (MGRRNRRNRQRHQ) show a composition bias toward basic residues. The interval 1–30 (MGRRNRRNRQRHQRSTEQRSPAEEEQRRKA) is disordered. Residues 14–30 (RSTEQRSPAEEEQRRKA) show a composition bias toward basic and acidic residues. S-adenosyl-L-methionine-binding positions include 186 to 192 (CAAPGSK), D217, D244, and D270. C323 (nucleophile) is an active-site residue. Disordered stretches follow at residues 476–499 (DEPA…SSKT) and 723–798 (KACD…ESVD). The segment covering 723-747 (KACDEEHIDEKMDIDGAKEESKELS) has biased composition (basic and acidic residues). The segment covering 751 to 762 (SGDDEDPKEEDV) has biased composition (acidic residues). The span at 763-772 (IDRGVLEHVA) shows a compositional bias: basic and acidic residues.

The protein belongs to the class I-like SAM-binding methyltransferase superfamily. RsmB/NOP family. TRM4 subfamily.

It localises to the nucleus. The protein resides in the nucleolus. Its subcellular location is the cytoplasm. It is found in the mitochondrion. The protein localises to the cytoskeleton. It localises to the spindle. The protein resides in the secreted. Its subcellular location is the extracellular exosome. The enzyme catalyses cytidine(48) in tRNA + S-adenosyl-L-methionine = 5-methylcytidine(48) in tRNA + S-adenosyl-L-homocysteine + H(+). The catalysed reaction is cytidine(49) in tRNA + S-adenosyl-L-methionine = 5-methylcytidine(49) in tRNA + S-adenosyl-L-homocysteine + H(+). It catalyses the reaction cytidine(50) in tRNA + S-adenosyl-L-methionine = 5-methylcytidine(50) in tRNA + S-adenosyl-L-homocysteine + H(+). It carries out the reaction cytidine(34) in tRNA precursor + S-adenosyl-L-methionine = 5-methylcytidine(34) in tRNA precursor + S-adenosyl-L-homocysteine + H(+). The enzyme catalyses a cytidine in mRNA + S-adenosyl-L-methionine = a 5-methylcytidine in mRNA + S-adenosyl-L-homocysteine + H(+). Its function is as follows. RNA cytosine C(5)-methyltransferase that methylates cytosine to 5-methylcytosine (m5C) in various RNAs, such as tRNAs, mRNAs and some long non-coding RNAs (lncRNAs). Involved in various processes, such as epidermal stem cell differentiation, testis differentiation and maternal to zygotic transition during early development: acts by increasing protein synthesis; cytosine C(5)-methylation promoting tRNA stability and preventing mRNA decay. Methylates cytosine to 5-methylcytosine (m5C) at positions 34 and 48 of intron-containing tRNA(Leu)(CAA) precursors, and at positions 48, 49 and 50 of tRNA(Gly)(GCC) precursors. tRNA methylation is required generation of RNA fragments derived from tRNAs (tRFs). Also mediates C(5)-methylation of mitochondrial tRNAs. Catalyzes cytosine C(5)-methylation of mRNAs, leading to stabilize them and prevent mRNA decay. Cytosine C(5)-methylation of mRNAs also regulates mRNA export. Also mediates cytosine C(5)-methylation of non-coding RNAs, such as vault RNAs (vtRNAs), promoting their processing into regulatory small RNAs. Required for proper spindle assembly and chromosome segregation, independently of its methyltransferase activity. The chain is RNA cytosine-C(5)-methyltransferase NSUN2 from Xenopus tropicalis (Western clawed frog).